The sequence spans 23 residues: Septenin 2b (23 aa).

In terms of tissue distribution, expressed in skin glands.

The protein localises to the secreted. In terms of biological role, may act as an antimicrobial peptide. The sequence is that of Septenin 2b from Osteopilus septentrionalis (Cuban treefrog).